An 883-amino-acid chain; its full sequence is Bifunctional heparan sulfate N-deacetylase/N-sulfotransferase 2 (883 aa).

The Cytoplasmic portion of the chain corresponds to 1–18; that stretch reads MLQLWKVVRPARQLELHR. A helical; Signal-anchor for type II membrane protein transmembrane segment spans residues 19–39; the sequence is LILLLIGFSLVSMGFLAYYVS. Topologically, residues 40–883 are lumenal; that stretch reads TSPKAKEPLP…REELQHSSVG (844 aa). The heparan sulfate N-deacetylase 2 stretch occupies residues 41–597; sequence SPKAKEPLPL…KRHKDIWSKE (557 aa). Residues 49–82 are disordered; it reads PLPLGDCSSSGAAGPGPARPPVPPRPQRPPETTR. Pro residues predominate over residues 65 to 77; the sequence is PARPPVPPRPQRP. Residues Asn-233, Asn-350, and Asn-400 are each glycosylated (N-linked (GlcNAc...) asparagine). Residues 598–883 form a heparan sulfate N-sulfotransferase 2 region; that stretch reads KTCDRLPKFL…REELQHSSVG (286 aa). Lys-613 functions as the For sulfotransferase activity in the catalytic mechanism. 613–617 serves as a coordination point for 3'-phosphoadenylyl sulfate; that stretch reads KTGTT. An N-linked (GlcNAc...) asparagine glycan is attached at Asn-666. Position 711 (Ser-711) interacts with 3'-phosphoadenylyl sulfate. Asn-726 and Asn-802 each carry an N-linked (GlcNAc...) asparagine glycan. Cys-817 and Cys-827 are joined by a disulfide. 832 to 836 serves as a coordination point for 3'-phosphoadenylyl sulfate; the sequence is KGRRY.

It belongs to the sulfotransferase 1 family. NDST subfamily. Monomer. In terms of tissue distribution, widely expressed in adult and throughout development.

It is found in the golgi apparatus membrane. It carries out the reaction alpha-D-glucosaminyl-[heparan sulfate](n) + 3'-phosphoadenylyl sulfate = N-sulfo-alpha-D-glucosaminyl-[heparan sulfate](n) + adenosine 3',5'-bisphosphate + 2 H(+). Its pathway is glycan metabolism; heparan sulfate biosynthesis. The protein operates within glycan metabolism; heparin biosynthesis. In terms of biological role, essential bifunctional enzyme that catalyzes both the N-deacetylation and the N-sulfation of glucosamine (GlcNAc) of the glycosaminoglycan in heparan sulfate. Modifies the GlcNAc-GlcA disaccharide repeating sugar backbone to make N-sulfated heparosan, a prerequisite substrate for later modifications in heparin biosynthesis. Plays a role in determining the extent and pattern of sulfation of heparan sulfate. Required for the exosomal release of SDCBP, CD63 and syndecan. The polypeptide is Bifunctional heparan sulfate N-deacetylase/N-sulfotransferase 2 (Ndst2) (Mus musculus (Mouse)).